The primary structure comprises 351 residues: UDP-N-acetylenolpyruvoylglucosamine reductase (351 aa).

Residues 11–213 (GVGGSIACFI…KQVRDQVLRI (203 aa)) enclose the FAD-binding PCMH-type domain. Residue arginine 158 is part of the active site. Serine 239 functions as the Proton donor in the catalytic mechanism. Glutamate 343 is an active-site residue.

This sequence belongs to the MurB family. It depends on FAD as a cofactor.

Its subcellular location is the cytoplasm. It carries out the reaction UDP-N-acetyl-alpha-D-muramate + NADP(+) = UDP-N-acetyl-3-O-(1-carboxyvinyl)-alpha-D-glucosamine + NADPH + H(+). It participates in cell wall biogenesis; peptidoglycan biosynthesis. Its function is as follows. Cell wall formation. The chain is UDP-N-acetylenolpyruvoylglucosamine reductase from Tropheryma whipplei (strain Twist) (Whipple's bacillus).